A 65-amino-acid chain; its full sequence is MKYNIVFLFAIIASLACLQLTFAAPAASPLANPGASPDAAPNADPLADPFLPIIGKLLSGLLGKK.

Positions 1 to 23 (MKYNIVFLFAIIASLACLQLTFA) are cleaved as a signal peptide. AXPX repeat units follow at residues 23-26 (AAPA), 27-30 (ASPL), 31-34 (ANPG), 35-38 (ASPD), 39-42 (AAPN), 43-46 (ADPL), and 47-50 (ADPF). Residues 24 to 49 (APAASPLANPGASPDAAPNADPLADP) constitute a propeptide that is removed on maturation. At Leu62 the chain carries Leucine amide.

This sequence belongs to the MCD family. Crabrolin subfamily. As to expression, expressed by the venom gland.

The protein localises to the secreted. Its function is as follows. Shows antimicrobial activity against the Gram-negative bacteria E.coli ATCC 25922 (MIC=30 ug/ml), the Gram-positive bacteria S.aureus ATCC 2592 (MIC=5 ug/ml) and the fungus C.albicans ATCC 2002 (MIC=25 ug/ml). Acts as a mast cell degranulating peptide. Its mast cell degranulation activity may be related to the activation of G-protein coupled receptors in mast cells as well as interaction with other proteins located in cell endosomal membranes in the mast cells. Induces the chemotaxis of neutrophils. This Vespa magnifica (Hornet) protein is Vespid chemotactic peptide 5h.